The sequence spans 466 residues: MSIASVASVFKGEHAVGSTVTVRGWVRTRRDSKAGISFLAVYDGSCFNPIQGVVPNSLENYDNEVLKLTAGCSVIVTGDIVESPGAGQAYELQVTAVEVTGWVEDPDTYPMAAKRHSIEHLRELAHLRPRTNIIGAVARVRNCLSQAIHRFYHENGFVWVSTPLITASDCEGAGEMFRVSTLDMENLPRTSDGKVDYDKDFFGKEAFLTVSGQLNGETYACALSKIYTFGPTFRAENSNTSRHLAEFWMVEPEVAFATLNDIAGLAEGMLKYAFNAVLTERMDDLQFFAQHVDKTVIERLQSFVSSDFAQVDYTDAVEILQKSGREFEFPVSWGIDLSSEHERYLAEEHFKAPVVVKNYPKDIKAFYMRLNEDGKTVAAMDVLAPGIGEIIGGSQREERLDVLDMRLEEMDLNKEDYWWYRDLRRYGTVPHAGFGLGFERLVSYVTGVSNIRDVIPFPRAPRTANF.

The protein belongs to the class-II aminoacyl-tRNA synthetase family. As to quaternary structure, homodimer.

It localises to the cytoplasm. The enzyme catalyses tRNA(Asn) + L-asparagine + ATP = L-asparaginyl-tRNA(Asn) + AMP + diphosphate + H(+). In Shewanella oneidensis (strain ATCC 700550 / JCM 31522 / CIP 106686 / LMG 19005 / NCIMB 14063 / MR-1), this protein is Asparagine--tRNA ligase.